The chain runs to 265 residues: Glutamate racemase (265 aa).

Substrate is bound by residues 12-13 (DS) and 44-45 (YG). Cys75 (proton donor/acceptor) is an active-site residue. A substrate-binding site is contributed by 76–77 (NT). Residue Cys186 is the Proton donor/acceptor of the active site. Residue 187–188 (TH) coordinates substrate.

The protein belongs to the aspartate/glutamate racemases family.

The catalysed reaction is L-glutamate = D-glutamate. Its pathway is cell wall biogenesis; peptidoglycan biosynthesis. In terms of biological role, provides the (R)-glutamate required for cell wall biosynthesis. This Pseudomonas entomophila (strain L48) protein is Glutamate racemase.